A 251-amino-acid chain; its full sequence is Hydroxyacylglutathione hydrolase (251 aa).

Zn(2+) contacts are provided by H53, H55, D57, H58, H110, D127, and H165.

The protein belongs to the metallo-beta-lactamase superfamily. Glyoxalase II family. As to quaternary structure, monomer. Zn(2+) is required as a cofactor.

The enzyme catalyses an S-(2-hydroxyacyl)glutathione + H2O = a 2-hydroxy carboxylate + glutathione + H(+). It participates in secondary metabolite metabolism; methylglyoxal degradation; (R)-lactate from methylglyoxal: step 2/2. Functionally, thiolesterase that catalyzes the hydrolysis of S-D-lactoyl-glutathione to form glutathione and D-lactic acid. This Yersinia pseudotuberculosis serotype IB (strain PB1/+) protein is Hydroxyacylglutathione hydrolase.